A 224-amino-acid chain; its full sequence is Ribonuclease 3 (224 aa).

Residues 4-126 form the RNase III domain; the sequence is LDRLQRQISY…IIGAISLDSS (123 aa). Mg(2+) is bound at residue Glu-39. Residue Asp-43 is part of the active site. Mg(2+) is bound by residues Asp-112 and Glu-115. The active site involves Glu-115. One can recognise a DRBM domain in the interval 153-223; sequence DPKTRLQEYL…AEQILTALEI (71 aa).

This sequence belongs to the ribonuclease III family. In terms of assembly, homodimer. It depends on Mg(2+) as a cofactor.

Its subcellular location is the cytoplasm. The catalysed reaction is Endonucleolytic cleavage to 5'-phosphomonoester.. Its function is as follows. Digests double-stranded RNA. Involved in the processing of primary rRNA transcript to yield the immediate precursors to the large and small rRNAs (23S and 16S). Processes some mRNAs, and tRNAs when they are encoded in the rRNA operon. Processes pre-crRNA and tracrRNA of type II CRISPR loci if present in the organism. This is Ribonuclease 3 from Mannheimia succiniciproducens (strain KCTC 0769BP / MBEL55E).